Reading from the N-terminus, the 144-residue chain is Protein cornichon homolog 1 (144 aa).

Residues 1–10 (MAFTFAAFCY) are Cytoplasmic-facing. A helical transmembrane segment spans residues 11–31 (MLALLLTAALIFFAIWHIIAF). Residues 32 to 56 (DELKTDYKNPIDQCNTLNPLVLPEY) lie on the Lumenal side of the membrane. Residues 57-77 (LIHAFFCVMFLCAAEWLTLGL) form a helical membrane-spanning segment. At 78-122 (NMPLLAYHIWRYMSRPVMSGPGLYDPTTIMNADILAYCQKEGWCK) the chain is on the cytoplasmic side. Residues 123–143 (LAFYLLAFFYYLYGMIYVLVS) traverse the membrane as a helical segment. Residue Ser-144 is a topological domain, lumenal.

It belongs to the cornichon family. As to quaternary structure, interacts with AREG immature precursor and with immature TGFA, i.e. with a prosegment and lacking full N-glycosylation, but not with the fully N-glycosylated form. In the Golgi apparatus, may form a complex with GORASP55 and transmembrane TGFA.

It is found in the endoplasmic reticulum membrane. The protein resides in the golgi apparatus membrane. Its function is as follows. Involved in the selective transport and maturation of TGF-alpha family proteins. This chain is Protein cornichon homolog 1 (CNIH1), found in Bos taurus (Bovine).